Consider the following 377-residue polypeptide: UPF0754 membrane protein YheB (377 aa).

2 helical membrane-spanning segments follow: residues 1 to 21 and 357 to 377; these read MGIA…GAVT and YLGG…VILF.

The protein belongs to the UPF0754 family.

The protein localises to the cell membrane. The sequence is that of UPF0754 membrane protein YheB (yheB) from Bacillus subtilis (strain 168).